The following is a 4561-amino-acid chain: StAR-related lipid transfer protein 9 (4561 aa).

A Kinesin motor domain is found at 3 to 384 (NVQVAVRVRP…MRYASNAKNI (382 aa)). 103–110 (GQTGSGKT) provides a ligand contact to ATP. Positions 307 to 321 (SSGGDSGVPSTTSGA) are enriched in low complexity. The segment at 307 to 330 (SSGGDSGVPSTTSGASSGGGPARR) is disordered. The FHA domain maps to 482 to 533 (TKIGRIDSDQEQDIVLQGQWIERDHCTITSTCGVVILRPTQGARCTVNGREV). Disordered stretches follow at residues 784 to 805 (SRAP…RRSR), 873 to 1064 (SRWR…DTES), and 1092 to 1153 (WNLP…PSDS). 4 stretches are compositionally biased toward polar residues: residues 789-805 (WASS…RRSR), 884-903 (ASTQ…SQEI), 911-920 (CQMSSQGQST), and 939-948 (RWASVNTKTG). 2 stretches are compositionally biased toward basic and acidic residues: residues 1046–1060 (RPIK…RDLS) and 1124–1135 (SRGEYSMKDHGH). At serine 1164 the chain carries Phosphoserine. Disordered stretches follow at residues 1288-1392 (PSGD…SDMS), 1700-1767 (REAW…EEEN), 1959-1980 (ECKA…EEKQ), 2077-2120 (TNAT…ADRL), 2320-2356 (LATG…LGGS), 2384-2427 (VSTS…SSLD), 2439-2467 (FLLQ…LPNS), 2622-2656 (KPRQ…DPLP), 2712-2735 (KDSI…SEKI), 2777-2800 (TGLE…GNVG), 3002-3067 (RSVE…PGTL), 3185-3207 (AQTE…REQL), 3246-3286 (ELNL…TSLK), 3645-3703 (EGAA…LRPE), 3790-3847 (SDLA…PQQS), and 3863-3913 (QPKT…GRTT). The segment covering 1300–1321 (DIHEIQPHDEKPKHWLSIEEPK) has biased composition (basic and acidic residues). 2 stretches are compositionally biased toward polar residues: residues 1328-1360 (LPQS…SQGL) and 1722-1741 (PKLS…TTTK). 2 stretches are compositionally biased toward basic and acidic residues: residues 1754–1767 (ELGK…EEEN) and 1970–1980 (QSKEEPLEEKQ). Positions 2077–2091 (TNATSNNNTQIQKLT) are enriched in polar residues. The span at 2096–2110 (RSREYVQTRESESEH) shows a compositional bias: basic and acidic residues. Polar residues-rich tracts occupy residues 2333–2351 (TRSS…TTHT) and 2399–2408 (TSTGSTTQEA). Positions 2414–2463 (EATVQKERKNSSLDRISRQAEKRVSFLLQEDSNQGEEERQKAEETSEDQQ) form a coiled coil. Basic and acidic residues predominate over residues 2417–2427 (VQKERKNSSLD). Residues 2634-2647 (DSSEVIEKRKEASR) are compositionally biased toward basic and acidic residues. Composition is skewed to polar residues over residues 3039 to 3054 (LKNN…SQTM) and 3187 to 3199 (TEPS…THSQ). The segment covering 3689–3700 (PASPDGSPPPSL) has biased composition (pro residues). Residues 3812-3835 (DSQRAESLDREGKSPLGKSSERLL) show a composition bias toward basic and acidic residues. Positions 3863–3874 (QPKTTTGDQSKL) are enriched in polar residues. Positions 4185–4224 (SDIELMLQEYRRAREEAKVEIAQARDRLKERTEQEKMRIR) form a coiled coil. In terms of domain architecture, START spans 4344–4561 (PYQDLAKHIV…VAKLASFLRS (218 aa)).

It belongs to the TRAFAC class myosin-kinesin ATPase superfamily. Kinesin family. Interacts with ATAD3A.

The protein localises to the cytoplasm. It localises to the cytoskeleton. The protein resides in the microtubule organizing center. Its subcellular location is the centrosome. It is found in the centriole. The protein localises to the nucleus. Its function is as follows. Microtubule-dependent motor protein required for spindle pole assembly during mitosis. Required to stabilize the pericentriolar material (PCM). This is StAR-related lipid transfer protein 9 (Stard9) from Mus musculus (Mouse).